Here is a 93-residue protein sequence, read N- to C-terminus: Small ribosomal subunit protein uS19 (93 aa).

Belongs to the universal ribosomal protein uS19 family.

Its function is as follows. Protein S19 forms a complex with S13 that binds strongly to the 16S ribosomal RNA. This chain is Small ribosomal subunit protein uS19, found in Citrifermentans bemidjiense (strain ATCC BAA-1014 / DSM 16622 / JCM 12645 / Bem) (Geobacter bemidjiensis).